We begin with the raw amino-acid sequence, 493 residues long: Beta-hexosaminidase Amuc_2018 (493 aa).

Positions 1-21 (MARPLPILGGILLSFSPPAEA) are cleaved as a signal peptide. Position 122 (Arg-122) interacts with substrate. Residues Asp-151 and His-214 each act as charge relay system in the active site. Zn(2+)-binding residues include Cys-227 and Cys-247. Asp-278 serves as a coordination point for substrate. Catalysis depends on Glu-279, which acts as the Charge relay system. Residues Cys-288 and Cys-291 each contribute to the Zn(2+) site. Substrate-binding positions include Trp-345, 373 to 375 (YLD), and 421 to 423 (WAE).

The protein belongs to the glycosyl hydrolase 20 family.

It carries out the reaction Hydrolysis of terminal non-reducing N-acetyl-D-hexosamine residues in N-acetyl-beta-D-hexosaminides.. Its activity is regulated as follows. Significantly inhibited by the addition of sodium dodecyl sulfate (SDS), but not by EDTA, urea, 2-mercaptoethanol or Triton X-100. Strongly inhibited by Cu2(+) ions, in case of which the activity is decreased by 70%. No significant inhibition with Al(3+), Fe(3+), Ca(2+), Cd(2+), Mg(2+), Mn(2+), Ni(2+) and Zn(2+) ions. Strongly inhibited by PugNAc (O-(2-acetamido-2-deoxy-D-glucopyranosylideneamino) N-phenylcarbamate) in the sub-micromolar concentration range. PugNAc at a concentration of 0.5 mM decreases the activity by 50% and the addition of 1 mM PugNAc fully inhibits the enzyme. No significant reduction in the activity by alkylation using N-ethylmaleimide or 2-iodoacetamide. In terms of biological role, hydrolyzes terminal GlcNAc residues from terminally unbranched N-glycans and from chitobiose. Hydrolyzes beta-1,6-linked N-acetylglucosamine and beta-1,4-linked N-acetylgalactosamine from pNP-alpha-GalNAc[beta1,3Gal]beta1,6GlcNAc and pNP-beta-GlcNAc-beta1,4-GalNAc substrates, respectively, as well as beta-1,2-linked N-acetylglucosamine units from the non-reducing end of N-glycans. Hydrolyzes GlcNAc residues linked to alpha1,3- or alpha1,6-mannose branch, but has low activity on substrates with more than one GlcNAc residue on one of the mannose branches. Releases terminal GlcNAc moieties from the N-glycopeptide Gly-Glu-Asn-(GlcNAc2Man3GlcNAc2)-Arg with high efficiency. Has moderate hydrolytic activity on the chitobiose moiety of N-glycopeptide substrate Gly-Glu-Asn-(GlcNAc2)-Arg. Does not hydrolyze GlcNAc residues from N-glycan structures bearing a bisecting GlcNAc moiety (beta1,4-linked GlcNAc to the beta1,4-linked core mannose). Potentially capable of cleaving the specific glycoside linkages in the process of mucin degradation in human intestinal tract. Hydrolyzes synthetic substrate pNP-beta-GlcNAc with high activity and pNP-beta-GalNAc to a lesser extent. Does not hydrolyze pNP-beta-glucose, pNP-beta-galactose, pNP-alpha-glucose, pNP-alpha-galactose, pNP-alpha-GlcNAc or pNP-alpha-fucose. The protein is Beta-hexosaminidase Amuc_2018 of Akkermansia muciniphila (strain ATCC BAA-835 / DSM 22959 / JCM 33894 / BCRC 81048 / CCUG 64013 / CIP 107961 / Muc).